A 552-amino-acid polypeptide reads, in one-letter code: Ribosomal lysine N-methyltransferase 3 (552 aa).

The SET domain occupies 26-335; sequence SKCDIRESPL…QGQEIFNSYG (310 aa). Tyr-334 is an S-adenosyl-L-methionine binding site. Residues 399 to 432 are disordered; it reads EDEEDEDGQAKSDNLSDDIESEEEEEEEEGDDSL. Residues 413-432 show a composition bias toward acidic residues; that stretch reads LSDDIESEEEEEEEEGDDSL.

The protein belongs to the class V-like SAM-binding methyltransferase superfamily.

It localises to the nucleus. Its function is as follows. S-adenosyl-L-methionine-dependent protein-lysine N-methyltransferase that monomethylates 60S ribosomal protein L42 (RPL42A and RPL42B) at 'Lys-40'. This chain is Ribosomal lysine N-methyltransferase 3, found in Saccharomyces cerevisiae (strain ATCC 204508 / S288c) (Baker's yeast).